A 309-amino-acid chain; its full sequence is Tagatose-6-phosphate kinase (309 aa).

It belongs to the carbohydrate kinase PfkB family. LacC subfamily.

It carries out the reaction D-tagatofuranose 6-phosphate + ATP = D-tagatofuranose 1,6-bisphosphate + ADP + H(+). The protein operates within carbohydrate metabolism; D-tagatose 6-phosphate degradation; D-glyceraldehyde 3-phosphate and glycerone phosphate from D-tagatose 6-phosphate: step 1/2. The sequence is that of Tagatose-6-phosphate kinase from Streptococcus pyogenes serotype M4 (strain MGAS10750).